A 122-amino-acid polypeptide reads, in one-letter code: Large ribosomal subunit protein uL14 (122 aa).

Belongs to the universal ribosomal protein uL14 family. In terms of assembly, part of the 50S ribosomal subunit. Forms a cluster with proteins L3 and L19. In the 70S ribosome, L14 and L19 interact and together make contacts with the 16S rRNA in bridges B5 and B8.

Its function is as follows. Binds to 23S rRNA. Forms part of two intersubunit bridges in the 70S ribosome. In Pseudomonas savastanoi pv. phaseolicola (strain 1448A / Race 6) (Pseudomonas syringae pv. phaseolicola (strain 1448A / Race 6)), this protein is Large ribosomal subunit protein uL14.